The primary structure comprises 277 residues: Large ribosomal subunit protein uL2 (277 aa).

A disordered region spans residues 220-277; it reads VRGSVMNPNDHPHGGGEGKAPIGRPSPMSPWGKKTLGKKTRSSKARSEKLIIRHRKSR. A compositionally biased stretch (basic residues) spans 254–263; that stretch reads TLGKKTRSSK.

It belongs to the universal ribosomal protein uL2 family. In terms of assembly, part of the 50S ribosomal subunit. Forms a bridge to the 30S subunit in the 70S ribosome.

In terms of biological role, one of the primary rRNA binding proteins. Required for association of the 30S and 50S subunits to form the 70S ribosome, for tRNA binding and peptide bond formation. It has been suggested to have peptidyltransferase activity; this is somewhat controversial. Makes several contacts with the 16S rRNA in the 70S ribosome. The sequence is that of Large ribosomal subunit protein uL2 from Latilactobacillus sakei subsp. sakei (strain 23K) (Lactobacillus sakei subsp. sakei).